Consider the following 315-residue polypeptide: Heme oxygenase 2 (315 aa).

Residues 1–15 show a composition bias toward polar residues; the sequence is MSSEVETSEGVDESE. Residues 1–29 form a disordered region; sequence MSSEVETSEGVDESENNSTAPEKENHTKM. The residue at position 2 (Ser2) is an N-acetylserine. At Ser2 the chain carries Phosphoserine. At 2-294 the chain is on the cytoplasmic side; it reads SSEVETSEGV…TAMAVLRKPS (293 aa). Heme b-binding residues include His44, Tyr153, Lys198, and Arg202. HRM repeat units lie at residues 263 to 268 and 280 to 285; these read KCPFYA and NCPFRT. S-nitrosocysteine occurs at positions 264 and 281. A helical; Anchor for type IV membrane protein membrane pass occupies residues 295-315; it reads LQLILAASVALVAGLLAWYYM.

It belongs to the heme oxygenase family. In terms of processing, a soluble form arises by proteolytic removal of the membrane anchor. S-nitrosylated by BLVRB. In terms of tissue distribution, widely distributed in body with a high concentration in the brain.

It is found in the microsome membrane. The protein localises to the endoplasmic reticulum membrane. It carries out the reaction heme b + 3 reduced [NADPH--hemoprotein reductase] + 3 O2 = biliverdin IXalpha + CO + Fe(2+) + 3 oxidized [NADPH--hemoprotein reductase] + 3 H2O + H(+). Its activity is regulated as follows. Inhibited by metalloporphyrins such as Sn- and Zn-protoporphyrins. Its function is as follows. Catalyzes the oxidative cleavage of heme at the alpha-methene bridge carbon, released as carbon monoxide (CO), to generate biliverdin IXalpha, while releasing the central heme iron chelate as ferrous iron. In Rattus norvegicus (Rat), this protein is Heme oxygenase 2 (Hmox2).